Here is a 335-residue protein sequence, read N- to C-terminus: Phosphate acyltransferase (335 aa).

The protein belongs to the PlsX family. As to quaternary structure, homodimer. Probably interacts with PlsY.

It is found in the cytoplasm. The catalysed reaction is a fatty acyl-[ACP] + phosphate = an acyl phosphate + holo-[ACP]. It functions in the pathway lipid metabolism; phospholipid metabolism. Catalyzes the reversible formation of acyl-phosphate (acyl-PO(4)) from acyl-[acyl-carrier-protein] (acyl-ACP). This enzyme utilizes acyl-ACP as fatty acyl donor, but not acyl-CoA. The chain is Phosphate acyltransferase from Streptococcus equi subsp. zooepidemicus (strain MGCS10565).